We begin with the raw amino-acid sequence, 509 residues long: MEEIQRYLQPDRSQQHNFLYPLIFQEYIYALAHDHGLNRNRLILLENPGYNNKFSFLIVKRLITRMYQQNHFLISTNDSNKNAFLGCNKSLYSQMISEGFAFIVEIPFSLRLISSLSSFEGKKIFKSHNLRSIHSTFPFLEDNFSHLNYVLDILIPYPVHLEILVQTLRYWVKDASSLHLLRFFLHEYWNLNSLITSKKPGYSFSKKNQRFFFFLYNSYVYECESTFVFLRNQSSHLRSTSFGALLERIYFYGKIERLVEVFAKDFQITLWLFKDPFMHYVRYQGKSILASKGTFLLMNKWKFYLVNFWQCHFSLCFHTGRIHINQLSNHSRNFMGYLSSVRLNPSMVRSQMLENSFLINNAIKKFDTLVPLIPLIGSLAKANFCTVLGHPISKPVWSDLSDSDIIDRFGRICRNLFHYYSGSSKKKTLYRIKYILRLSCARTLARKHKSTVRTFFKRSGSELLEEFLTSEEQVLSLTFPRASSSLWGVYRSRIWYLDIFCINDLANYQ.

This sequence belongs to the intron maturase 2 family. MatK subfamily.

Its subcellular location is the plastid. It localises to the chloroplast. In terms of biological role, usually encoded in the trnK tRNA gene intron. Probably assists in splicing its own and other chloroplast group II introns. The chain is Maturase K from Nicotiana glauca (Glaucous tobacco).